The following is a 214-amino-acid chain: GTP-binding nuclear protein GSP1/Ran (214 aa).

The region spanning 4 to 168 is the Small GTPase Ran-type domain; sequence EVAAFKLVLV…LWLARKLAGN (165 aa). 15–22 lines the GTP pocket; the sequence is DGGTGKTT. Positions 34–42 are switch-I; sequence NRYNATLGV. Residues Gly65, 119 to 122, and 147 to 149 each bind GTP; these read NKVD and SAK. The interval 65 to 81 is switch-II; the sequence is GQEKFGGLRDGYYINGQ.

This sequence belongs to the small GTPase superfamily. Ran family. Found in a nuclear export complex with RanGTP, exportin and pre-miRNA.

Its subcellular location is the nucleus. In terms of biological role, GTP-binding protein involved in nucleocytoplasmic transport. Required for the import of protein into the nucleus and also for RNA export. Involved in chromatin condensation and control of cell cycle. This is GTP-binding nuclear protein GSP1/Ran (GSP1) from Yarrowia lipolytica (strain CLIB 122 / E 150) (Yeast).